Consider the following 721-residue polypeptide: MPLPQTGAPGPEVKSPREPRKSQTLPVTTWKSNSMKEQSVHHGGSLRPSLGMLKQTLFRTSLRTSTHKPKEDPGLFRRSSRFLFRSLRRAIDEGLTAGHPQGPAVPEKPSKVTDGVSRQAATGTEAEDLEPQAESKSVADLITERQLVKAFEQLRYLETQLVADKTSRTFTQDPTAYARRAMDLCLHYDGMAAEIGAIVREALSSEGVDRDALAELAQVVHLEEEAHQTSQAEGDFLSTPRHWRMHWEDAVRLSAQESVQQAGAKVIPGAAEGSSDLAQLLAELGGVVRHDLQKVRLEMQPAYEATDFPVWETYLRAFHSAVAQRLQELARDARGCEQLYVLLDWAANVYGSPDFLGAPDLALPTEPLPPLLEPALWARLESDYTSFLETKITSCFDSILQLEQNRWEADEDREVLQGLYHAPLSIDVHMLVAEHVKAAGAISAELEATTLQICARALCLFVPRFEKAFLASKAVSEWYLGAYINACVELRTSLLARFPGTIKELEKPLVAATNSFQKHLLQIVQQDMQPLFKVLYTKSWLTQDTLRPLMDKVVDFAHHLEHVTPPLAQETLQEVHRFVVREYLGQVLRPHERFSGQDRLKGSNKMNLDAQAISNTFQGLGSEAKWLDQAILSVAEILGETYKDDIRRHLETLIRSYPDIRRDHILAILALRRLGRRRNQNLLQHTQDLLRAAHETRLPSHHVLFEEIEVPTSVDVLITCI.

Disordered regions lie at residues 1–52 and 94–135; these read MPLP…SLGM and GLTA…QAES. A compositionally biased stretch (polar residues) spans 22-37; it reads SQTLPVTTWKSNSMKE. Phosphoserine is present on Ser-515.

Belongs to the SEC6 family.

The chain is Exocyst complex component 3-like protein 4 (Exoc3l4) from Mus musculus (Mouse).